We begin with the raw amino-acid sequence, 611 residues long: Fatty acid photodecarboxylase, chloroplastic (611 aa).

Positions 1–22 (MMLGPKTVTRGATKGAAPRSMA) are disordered. A chloroplast-targeting transit peptide spans 1–36 (MMLGPKTVTRGATKGAAPRSMAARRVGGARRLSVRA). FAD is bound by residues 55-56 (TA), glutamate 76, methionine 125, serine 129, and 133-136 (NATL). Residues cysteine 392, arginine 412, tyrosine 427, and glutamine 447 each coordinate hexadecanoate. Glycine 582 is a binding site for FAD.

The protein belongs to the GMC oxidoreductase family. FAD is required as a cofactor.

It localises to the plastid. The protein resides in the chloroplast. The catalysed reaction is a long-chain fatty acid + hnu + H(+) = a long-chain alkane + CO2. It catalyses the reaction hnu + hexadecanoate + H(+) = pentadecane + CO2. Activated by blue light and repressed by red light. Functionally, catalyzes the decarboxylation of free fatty acids to n-alkanes or n-alkenes in response to blue light. Substrate preference is toward fatty acids with C17 or C18 chains. Saturated fatty acids are converted to alkanes, not alkenes. The decarboxylation is initiated through electron abstraction from the fatty acid by the photo-excited FAD. The protein is Fatty acid photodecarboxylase, chloroplastic of Chlamydomonas reinhardtii (Chlamydomonas smithii).